The following is a 1311-amino-acid chain: Zinc finger protein 521 (1311 aa).

Over residues 1–10 (MSRRKQAKPR) the composition is skewed to basic residues. Residues 1–37 (MSRRKQAKPRSLKDPNCKLEDKTEDGEALDCKKRPED) are disordered. Over residues 11–21 (SLKDPNCKLED) the composition is skewed to basic and acidic residues. The C2H2-type 1; degenerate zinc finger occupies 47-67 (HSCDSCLQVFESLSDITEHKI). The tract at residues 81–108 (DPTCSWPASSPSSKDQTSPSHGEGCDFG) is disordered. A compositionally biased stretch (low complexity) spans 87 to 102 (PASSPSSKDQTSPSHG). 7 C2H2-type zinc fingers span residues 118-140 (YPCQFCDKSFSRLSYLKHHEQSH), 146-168 (FKCTYCSRLFKHKRSRDRHIKLH), 174-196 (YHCSECDAAFSRSDHLKIHLKTH), 202-224 (YKCAICRRGFLSSSSLHGHMQVH), 246-269 (QKCSQCEEGFDFPEDLQKHIAECH), 281-304 (LQCVYCHELFVEETSLMNHMEQVH), and 310-332 (NSCSICSESFHTVEELYSHMDSH). A compositionally biased stretch (low complexity) spans 349–358 (VGYTSVSSTT). Residues 349–397 (VGYTSVSSTTPDSNLSVDSSTMVEAAPPIPKSRGRKRAAQQTPDMTGPS) are disordered. 2 stretches are compositionally biased toward polar residues: residues 359 to 370 (PDSNLSVDSSTM) and 387 to 397 (AQQTPDMTGPS). A C2H2-type 9; degenerate zinc finger spans residues 405 to 429 (YSCIYCNKQLFSSLAVLQIHLKTMH). 3 consecutive C2H2-type zinc fingers follow at residues 437-460 (HICQYCLEVLPSLYNLNEHLKQVH), 477-500 (YQCNFCSEVVNDLNTLQEHIRCSH), and 513-536 (FFCPHCYMGFLTDSSLEEHIRQVH). At Ser546 the chain carries Phosphoserine. Residues 560 to 585 (YSCSYCTNSPIFNSVLKLNKHIKENH) form a C2H2-type 13; atypical zinc finger. Phosphoserine is present on residues Ser605 and Ser608. 7 consecutive C2H2-type zinc fingers follow at residues 634–656 (YICNQCGAKYTSLDSFQTHLKTH), 664–686 (LTCPQCNKEFPNQESLLKHVTIH), 694–717 (YICESCDKQFTSVDDLQKHLLDMH), 722–745 (FRCTLCQEVFDSKVSIQLHLAVKH), 752–775 (YRCTSCNWDFRNETDLQLHVKHNH), 783–805 (HKCIFCGESFGTEVELQCHITTH), and 809–832 (YNCKFCSKAFHAIILLEKHLREKH). The segment at 863–882 (TNSQESHNSHDGSEEDVDTS) is disordered. The segment at 886 to 908 (YGCDICGAAYTMETLLQNHQLRD) adopts a C2H2-type 21; degenerate zinc-finger fold. C2H2-type zinc fingers lie at residues 930–952 (YKCNVCSRTFFSENGLREHMQTH), 959–981 (YMCPICGERFPSLLTLTEHKVTH), and 1020–1042 (FRCVVCMQTVTSTLELKIHGTFH). The C2H2-type 25; degenerate zinc-finger motif lies at 1065-1083 (YKCASCLKEFRSKQDLVKL). The C2H2-type 26 zinc finger occupies 1138–1161 (TRCSSCNVKFESESELQNHIQTIH). Lys1146 is covalently cross-linked (Glycyl lysine isopeptide (Lys-Gly) (interchain with G-Cter in SUMO2)). Polar residues predominate over residues 1168-1178 (SNSTQLKTPQV). The interval 1168-1188 (SNSTQLKTPQVSPMPRISPSQ) is disordered. 4 C2H2-type zinc fingers span residues 1195–1217 (YQCIKCQMVFYNEWDIQVHVANH), 1225–1247 (HECKLCSQTFDSPAKLQCHLIEH), 1256–1279 (FKCPVCFTVFVQANKLQQHIFSAH), and 1286–1309 (YDCTQCPQKFFFQTELQNHTMTQH).

This sequence belongs to the krueppel C2H2-type zinc-finger protein family. In terms of assembly, interacts with EBF1. Interacts with SMAD1 and SMAD4. Predominantly expressed in hematopoietic cells. Present in organs and tissues that contain stem and progenitor cells, myeloid and/or lymphoid: placenta, spleen, lymph nodes, thymus, bone marrow and fetal liver. Within the hematopoietic system, it is abundant in CD34(+) cells but undetectable in mature peripheral blood leukocytes, and its levels rapidly decrease during the differentiation of CD34(+) cells in response to hemopoietins.

The protein resides in the nucleus. In terms of biological role, transcription factor that can both act as an activator or a repressor depending on the context. Involved in BMP signaling and in the regulation of the immature compartment of the hematopoietic system. Associates with SMADs in response to BMP2 leading to activate transcription of BMP target genes. Acts as a transcriptional repressor via its interaction with EBF1, a transcription factor involved specification of B-cell lineage; this interaction preventing EBF1 to bind DNA and activate target genes. The chain is Zinc finger protein 521 (ZNF521) from Homo sapiens (Human).